The sequence spans 239 residues: ATP-dependent dethiobiotin synthetase BioD (239 aa).

15–20 (EIGKTF) is a binding site for ATP. Thr19 lines the Mg(2+) pocket. Lys40 is a catalytic residue. ATP-binding positions include Asp57, 118–121 (EGAG), and 178–179 (NH). Mg(2+) contacts are provided by Asp57 and Glu118.

Belongs to the dethiobiotin synthetase family. Homodimer. It depends on Mg(2+) as a cofactor.

It is found in the cytoplasm. The catalysed reaction is (7R,8S)-7,8-diammoniononanoate + CO2 + ATP = (4R,5S)-dethiobiotin + ADP + phosphate + 3 H(+). Its pathway is cofactor biosynthesis; biotin biosynthesis; biotin from 7,8-diaminononanoate: step 1/2. Functionally, catalyzes a mechanistically unusual reaction, the ATP-dependent insertion of CO2 between the N7 and N8 nitrogen atoms of 7,8-diaminopelargonic acid (DAPA, also called 7,8-diammoniononanoate) to form a ureido ring. This chain is ATP-dependent dethiobiotin synthetase BioD, found in Burkholderia lata (strain ATCC 17760 / DSM 23089 / LMG 22485 / NCIMB 9086 / R18194 / 383).